An 858-amino-acid chain; its full sequence is Piwi-like protein 1 (858 aa).

Positions 1–13 are enriched in basic residues; sequence MTGRARARSRGRG. Residues 1 to 56 are disordered; sequence MTGRARARSRGRGRGQEPAAPGAQPPVSQEAAKPVVSTPSEGQLVGRGRQKPAPGA. The span at 16 to 26 shows a compositional bias: low complexity; sequence QEPAAPGAQPP. In terms of domain architecture, PAZ spans 276 to 388; it reads TVLDFMYSLR…LVPEFCYLTG (113 aa). Positions 314-316 are required for binding 2'-O-methylated 3'-end of piRNAs; the sequence is TYR. The MID region stretch occupies residues 476-612; it reads SKEMRGLPLI…LQMNCKMGGE (137 aa). The Piwi domain occupies 552 to 844; that stretch reads MVVVILPTNR…LAFLVGQSIH (293 aa). Active-site residues include Asp629, Glu667, Asp699, and His833.

It belongs to the argonaute family. Piwi subfamily. Mg(2+) is required as a cofactor. Methylated on arginine residues; required for the interaction with Tudor domain-containing protein and subsequent localization to the meiotic nuage, also named P granule. In terms of tissue distribution, expressed exclusively in the adult gonads; expression in the ovary weaker than in the testis (at protein level). During neurogenesis and organogenesis, expression is detected in CNS (midbrain and eye) and fin buds. Starting from 24 hours post-fertilization, expression is found in the genital ridge.

Its subcellular location is the cytoplasm. Plays a central role during gametogenesis by repressing transposable elements and preventing their mobilization, which is essential for the germline integrity. Acts via the piRNA metabolic process, which mediates the repression of transposable elements during meiosis by forming complexes composed of piRNAs and Piwi proteins and governs the methylation and subsequent repression of transposons. Directly binds methylated piRNAs, a class of 24 to 30 nucleotide RNAs that are generated by a Dicer-independent mechanism and are primarily derived from transposons and other repeated sequence elements. Has a strong preference for piRNAs with a uridine nucleotide at their 5'-end (g1U preference, also named 1U-bias) and binds piRNAs in an opposite direction compared to piwil2/zili. Participates in a piRNA amplification loop with piwil2/zili. Not involved in the piRNA amplification loop, also named ping-pong amplification cycle. Acts as an endoribonuclease that cleaves transposon messenger RNAs. In Danio rerio (Zebrafish), this protein is Piwi-like protein 1 (piwil1).